A 248-amino-acid polypeptide reads, in one-letter code: Probable transcriptional regulatory protein Bind_0345 (248 aa).

Belongs to the TACO1 family.

It is found in the cytoplasm. The polypeptide is Probable transcriptional regulatory protein Bind_0345 (Beijerinckia indica subsp. indica (strain ATCC 9039 / DSM 1715 / NCIMB 8712)).